The primary structure comprises 595 residues: O-phosphoseryl-tRNA(Sec) selenium transferase (595 aa).

A pyridoxal 5'-phosphate-binding site is contributed by Arg-75. Residues 96–106 (GRSGDLFSEQP) are phosphate loop (P-loop). Arg-97, Ser-98, and Gln-105 together coordinate substrate. Residues 174–187 (RTVTKDSTSATSAA) show a composition bias toward polar residues. Disordered stretches follow at residues 174-208 (RTVTKDSTSATSAAPVQEPPMSEADRDRHDRTSLP) and 257-278 (STNRDSLDRGQDSIGSPSTPTS). Residues 196–205 (EADRDRHDRT) are compositionally biased toward basic and acidic residues. Residue Arg-358 participates in tRNA binding. At Lys-371 the chain carries N6-(pyridoxal phosphate)lysine. Arg-400 serves as a coordination point for substrate.

It belongs to the SepSecS family. In terms of assembly, homotetramer composed of two homodimers. Requires pyridoxal 5'-phosphate as cofactor.

It localises to the cytoplasm. It catalyses the reaction O-phospho-L-seryl-tRNA(Sec) + selenophosphate + H2O = L-selenocysteinyl-tRNA(Sec) + 2 phosphate. The protein operates within aminoacyl-tRNA biosynthesis; selenocysteinyl-tRNA(Sec) biosynthesis; selenocysteinyl-tRNA(Sec) from L-seryl-tRNA(Sec) (archaeal/eukaryal route): step 2/2. Converts O-phosphoseryl-tRNA(Sec) to selenocysteinyl-tRNA(Sec) required for selenoprotein biosynthesis. This chain is O-phosphoseryl-tRNA(Sec) selenium transferase, found in Leishmania donovani.